A 592-amino-acid chain; its full sequence is Aspartate--tRNA(Asp/Asn) ligase (592 aa).

Glutamate 171 lines the L-aspartate pocket. The segment at 195-198 is aspartate; the sequence is QLFK. Arginine 217 contributes to the L-aspartate binding site. ATP-binding positions include 217 to 219 and glutamine 226; that span reads RDE. Histidine 447 contacts L-aspartate. Glutamate 481 contacts ATP. An L-aspartate-binding site is contributed by arginine 488. Residue 533–536 participates in ATP binding; it reads GLDR.

This sequence belongs to the class-II aminoacyl-tRNA synthetase family. Type 1 subfamily. In terms of assembly, homodimer.

The protein localises to the cytoplasm. It catalyses the reaction tRNA(Asx) + L-aspartate + ATP = L-aspartyl-tRNA(Asx) + AMP + diphosphate. Its function is as follows. Aspartyl-tRNA synthetase with relaxed tRNA specificity since it is able to aspartylate not only its cognate tRNA(Asp) but also tRNA(Asn). Reaction proceeds in two steps: L-aspartate is first activated by ATP to form Asp-AMP and then transferred to the acceptor end of tRNA(Asp/Asn). The polypeptide is Aspartate--tRNA(Asp/Asn) ligase (Psychromonas ingrahamii (strain DSM 17664 / CCUG 51855 / 37)).